The following is a 293-amino-acid chain: MMKRIFLFIVTNLAILLMLSITLRLLGVDRILDAEGSELNFNALLVFSAVLGFGGSLISLAMSKWSAKHMTGAMVIDVPSNSTEGWLVETVRRQAKAAGIGMPEVAIYDSPDINAFATGMNRNNALVAVSTGLLQKMNRDEAEAVLAHEVSHVANGDMVTLALIQGVVNTFVIFLSRIIGHIVDRAVFKSEEGHGPAYFVTSLIAQMVLGILATIIVMWFSRQREFRADAGSAQISGRNKMVAALRRLQQEYEPSHLPDKIAAFGISGQKSQIGRLFMSHPPLEERIQALQSA.

2 helical membrane passes run 5 to 25 (IFLF…TLRL) and 43 to 63 (ALLV…LAMS). H148 provides a ligand contact to Zn(2+). Residue E149 is part of the active site. Residue H152 coordinates Zn(2+). A run of 2 helical transmembrane segments spans residues 159–179 (VTLA…SRII) and 199–219 (FVTS…IVMW). Residue E225 participates in Zn(2+) binding.

It belongs to the peptidase M48B family. The cofactor is Zn(2+).

It localises to the cell inner membrane. The chain is Protease HtpX homolog from Nitrosomonas europaea (strain ATCC 19718 / CIP 103999 / KCTC 2705 / NBRC 14298).